A 178-amino-acid polypeptide reads, in one-letter code: Cysteine protease inhibitor 7 (178 aa).

Cystine bridges form between Cys41–Cys93 and Cys141–Cys147.

It belongs to the protease inhibitor I3 (leguminous Kunitz-type inhibitor) family.

The protein localises to the vacuole. In terms of biological role, inhibitor of cysteine proteases. May protect the plant by inhibiting proteases of invading organisms. The protein is Cysteine protease inhibitor 7 of Solanum tuberosum (Potato).